The primary structure comprises 177 residues: Large ribosomal subunit protein uL6 (177 aa).

It belongs to the universal ribosomal protein uL6 family. Part of the 50S ribosomal subunit.

In terms of biological role, this protein binds to the 23S rRNA, and is important in its secondary structure. It is located near the subunit interface in the base of the L7/L12 stalk, and near the tRNA binding site of the peptidyltransferase center. This chain is Large ribosomal subunit protein uL6, found in Vibrio atlanticus (strain LGP32) (Vibrio splendidus (strain Mel32)).